We begin with the raw amino-acid sequence, 270 residues long: Probable feruloyl esterase C (270 aa).

Residues 1–22 (MAILSRLLTTVTLGSLLTSAVA) form the signal peptide.

Belongs to the faeC family.

The protein localises to the secreted. It catalyses the reaction feruloyl-polysaccharide + H2O = ferulate + polysaccharide.. Functionally, involved in degradation of plant cell walls. Hydrolyzes the feruloyl-arabinose ester bond in arabinoxylans, and the feruloyl-galactose ester bond in pectin. Active against paranitrophenyl-acetate, methyl ferulate and wheat arabinoxylan. This is Probable feruloyl esterase C (faeC) from Aspergillus terreus (strain NIH 2624 / FGSC A1156).